We begin with the raw amino-acid sequence, 694 residues long: Putative ankyrin repeat protein RBE_0921 (694 aa).

ANK repeat units lie at residues 122–151, 155–185, 216–245, 249–275, 279–317, 321–350, 351–382, 384–413, 423–452, and 456–485; these read LGKTPLQYAIINDKPELAKLLIDAGANINV, NGRNLFELAMYNSASDQTFELLLKTNININS, FNRTLLHQAAERNNIKKAQISINHNINVEA, TGETALHMLKTSKMAKILLKAGSNTEA, LGRTPLHNAILQANKRQVNIKNIHNIVLKLIKSGANPNA, YGFTPLEYAIRINDSKIFKLLIKNNAKFKK, NRYELFCQALESGNLTATKYLFKKEFLNNIND, NGQNYLYYIATGGNKEVLEYLVKKNHDNGK, QRNTPIHIAAQNGQFEIIKNFQKLGFDINA, and DGETVLHILARAQNGEMIKELIKLGADINI.

The chain is Putative ankyrin repeat protein RBE_0921 from Rickettsia bellii (strain RML369-C).